A 357-amino-acid chain; its full sequence is Protein BMRF2 (357 aa).

Topologically, residues 1-11 are virion surface; sequence MFSCKQHLSLG. Residues 12–32 are membrane-embedded; that stretch reads ACVFCLGLLASTPFIWCFVFA. Residues 33-46 are Virion surface-facing; sequence NLLSLEIFSPWQTH. The hydrophobic stretch at 47-67 threads the membrane; the sequence is VYRLGFPTACLMAVLWTLVPA. Topologically, residues 68–70 are virion surface; it reads KHA. Residues 71 to 91 are membrane-embedded; sequence VRAVTPAIMLNIASALIFFSL. Topologically, residues 92-98 are virion surface; it reads RVYSTST. Residues 99 to 121 are membrane-embedded; sequence WVSAPCLFLANLPLLCLWPRLAI. The Virion surface segment spans residues 122-133; sequence EIVYICPAIHQR. At 134-154 the chain is embedded in the membrane; that stretch reads FFELGLLLACTIFALSVVSRA. The Virion surface portion of the chain corresponds to 155–158; the sequence is LEVS. A transmembrane helix spans residues 159–179; it reads AVFMSPFFIFLALGSGSLAGA. The Virion surface portion of the chain corresponds to 180 to 217; the sequence is RRNQIYTSGLERRRSIFCARGDHSVASLKETLHKCPWD. Residues 199–201 carry the Integrin binding site motif; that stretch reads RGD. The segment at 218 to 238 is a transmembrane helix; the sequence is LLAISALTVLVVCVMIVLHVH. Topologically, residues 239-240 are virion surface; it reads AE. The segment at 241–261 is a transmembrane helix; that stretch reads VFFGLSRYLPLFLCGAMASGG. The Virion surface portion of the chain corresponds to 262 to 267; sequence LYLGHS. The chain crosses the lipid bilayer at residues 268–288; the sequence is SIIACVMATLCTLTSVVVYFL. Residues 289 to 298 are Virion surface-facing; that stretch reads HETLGPLGKT. Over 299-319 the chain traverses the membrane; the sequence is VLFISIFVYYFSGVAALSAAM. Residues 320-335 lie on the Virion surface side of the membrane; it reads RYKLKKFVNGPLVHLR. A transmembrane span lies at residues 336–356; it reads VVYMCCFVFTFCEYLLVTFIK. Serine 357 is a topological domain (virion surface).

The protein belongs to the herpesviridae BMRF2 family. As to quaternary structure, interacts with BDLF2. Interacts with host beta1 integrin family. Post-translationally, extensively glycosylated by O-linked oligosaccharides.

It is found in the virion membrane. The protein localises to the host cell membrane. Functionally, facilitates virus attachment to oral epithelial cells by binding to host beta1 integrin family. Participates in rearrangement of cellular actin to increase intercellular contacts by binding BDLF2 and thereby promote virus cell-to-cell spreading. This chain is Protein BMRF2, found in Homo sapiens (Human).